The following is a 32-amino-acid chain: Photosystem II reaction center protein T (32 aa).

The helical transmembrane segment at 3–23 (ALVYVFLLIGTLMIIFFAIFF) threads the bilayer.

This sequence belongs to the PsbT family. PSII is composed of 1 copy each of membrane proteins PsbA, PsbB, PsbC, PsbD, PsbE, PsbF, PsbH, PsbI, PsbJ, PsbK, PsbL, PsbM, PsbT, PsbY, PsbZ, Psb30/Ycf12, at least 3 peripheral proteins of the oxygen-evolving complex and a large number of cofactors. It forms dimeric complexes.

The protein resides in the plastid. Its subcellular location is the chloroplast thylakoid membrane. Functionally, found at the monomer-monomer interface of the photosystem II (PS II) dimer, plays a role in assembly and dimerization of PSII. PSII is a light-driven water plastoquinone oxidoreductase, using light energy to abstract electrons from H(2)O, generating a proton gradient subsequently used for ATP formation. This Cyanidioschyzon merolae (strain NIES-3377 / 10D) (Unicellular red alga) protein is Photosystem II reaction center protein T.